We begin with the raw amino-acid sequence, 24 residues long: M-poneritoxin-Ng1e (24 aa).

As to expression, expressed by the venom gland.

It is found in the secreted. The protein resides in the target cell membrane. In terms of biological role, has a broad spectrum of activity against both Gram-positive and Gram-negative bacteria and S.cerevisiae. Has insecticidal and hemolytic activities. May act by disrupting the integrity of the bacterial cell membrane. The chain is M-poneritoxin-Ng1e from Neoponera goeldii (Ponerine ant).